The following is a 375-amino-acid chain: Actin-binding Rho-activating protein (375 aa).

Residues 37–101 (ANENSTRQAQ…ATEVSHIKRK (65 aa)) form a disordered region. Basic and acidic residues predominate over residues 80–101 (PDGDREGRGSEEATEVSHIKRK). Serine 150 and serine 182 each carry phosphoserine. Positions 175–197 (EPKWKSDSIDTEDSGYGGDMEER) are disordered. Actin-binding regions lie at residues 193 to 293 (DMEE…AERA) and 294 to 375 (KRAE…TLLE). Interaction with actin regions lie at residues 234–279 (SQVD…GDEG) and 346–375 (MRAR…TLLE).

As to quaternary structure, binds F-actin and ABLIM1, ABLIM2 and ABLIM3. Interaction with ABLIM2 and ABLIM3 enhances activity. In terms of tissue distribution, predominantly expressed in heart and skeletal muscle, and expressed at lower levels in adrenal gland, brain, kidney, liver, and testis.

The protein resides in the cytoplasm. The protein localises to the myofibril. It localises to the sarcomere. It is found in the cytoskeleton. Its function is as follows. Acts as an activator of serum response factor (SRF)-dependent transcription possibly by inducing nuclear translocation of MKL1 or MKL2 and through a mechanism requiring Rho-actin signaling. The chain is Actin-binding Rho-activating protein from Rattus norvegicus (Rat).